The primary structure comprises 79 residues: Cytochrome c oxidase assembly factor 6 homolog (79 aa).

Residues 9-52 (RQACWGARDEYWKCLDENTEDASKCKKLRSSFESSCPQQWIKYF) form the CHCH domain. The short motif at 12–22 (CWGARDEYWKC) is the Cx9C motif element. Disulfide bonds link Cys12-Cys44 and Cys22-Cys33. A Cx10C motif motif is present at residues 33–44 (CKKLRSSFESSC).

The protein belongs to the cytochrome c oxidase subunit 6B family. As to quaternary structure, found in a complex with TMEM177, COX20, MT-CO2/COX2, COX18, SCO1 and SCO2. Interacts with COA1, MT-CO2/COX2, SCO1, SCO2 and COX20. Interacts with COX20 in a MT-CO2/COX2- and COX18-dependent manner. Interacts with COX16.

The protein resides in the mitochondrion intermembrane space. Its function is as follows. Involved in the maturation of the mitochondrial respiratory chain complex IV subunit MT-CO2/COX2. Thereby, may regulate early steps of complex IV assembly. Mitochondrial respiratory chain complex IV or cytochrome c oxidase is the component of the respiratory chain that catalyzes the transfer of electrons from intermembrane space cytochrome c to molecular oxygen in the matrix and as a consequence contributes to the proton gradient involved in mitochondrial ATP synthesis. May also be required for efficient formation of respiratory supercomplexes comprised of complexes III and IV. This Bos taurus (Bovine) protein is Cytochrome c oxidase assembly factor 6 homolog (COA6).